Consider the following 735-residue polypeptide: E3 UFM1-protein ligase 1 homolog (735 aa).

Positions 389-445 (RLEAEKKKQGGAKAAVKVQEETDDWGDGKKGGKGGKKNAKSVKGGSKSSAPSTSSNL) are disordered. Over residues 419–428 (GGKGGKKNAK) the composition is skewed to basic residues. A compositionally biased stretch (low complexity) spans 429–445 (SVKGGSKSSAPSTSSNL).

It belongs to the UFL1 family.

E3 UFM1-protein ligase that mediates ufmylation of target proteins. In Caenorhabditis elegans, this protein is E3 UFM1-protein ligase 1 homolog (ufl-1).